The chain runs to 567 residues: MKQSKVFIPTMREVPAEAEALSHRLLLKAGLIKQSTSGIYSYLPLATRVLNNISKIIREEMESIDAVEILMPALQQAELWEESGRWSAYGPELMRLKDRNGREFALGPTHEEVVTSLVRDELKSYKQLPLTLFQIQSKYRDEKRPRFGLLRGREFLMKDAYSFHSDEASLDATYQDMYQAYSRIFKRVGINARPVVADSGAIGGSHTHEFMALSEIGEDTIVYSNESDYAANIEKAEVVYHPSHKHSALAELTKVETPNVKTAQEVAEYLKRPLDEIVKTMIFKIDGEFIMFLVRGHHELNEVKLKSYFGTEHVEMATPDEIVNLVDANPGSLGPIFDKDIKIYADNYLQDLNNFVVGANEDHYHYINVNIGRDFDVTEYGDFRFITQGEMLSDGSGVAQFAEGIEVGQVFKLGTKYSESMNATFLDNQGKAQPLIMGCYGIGVSRTLSAIVEQNNDENGIIWPKSVTPFDIHLITINPKKDDQRTLGDQLYQKLMDSYDVLYDDRKERAGVKFNDSDLIGLPVRVVVGKRAEEGIVEVKQRINGLSEEVQIDELEYYLQELFKNIK.

The protein belongs to the class-II aminoacyl-tRNA synthetase family. ProS type 1 subfamily. As to quaternary structure, homodimer.

Its subcellular location is the cytoplasm. It carries out the reaction tRNA(Pro) + L-proline + ATP = L-prolyl-tRNA(Pro) + AMP + diphosphate. Catalyzes the attachment of proline to tRNA(Pro) in a two-step reaction: proline is first activated by ATP to form Pro-AMP and then transferred to the acceptor end of tRNA(Pro). As ProRS can inadvertently accommodate and process non-cognate amino acids such as alanine and cysteine, to avoid such errors it has two additional distinct editing activities against alanine. One activity is designated as 'pretransfer' editing and involves the tRNA(Pro)-independent hydrolysis of activated Ala-AMP. The other activity is designated 'posttransfer' editing and involves deacylation of mischarged Ala-tRNA(Pro). The misacylated Cys-tRNA(Pro) is not edited by ProRS. In Staphylococcus epidermidis (strain ATCC 35984 / DSM 28319 / BCRC 17069 / CCUG 31568 / BM 3577 / RP62A), this protein is Proline--tRNA ligase.